The primary structure comprises 405 residues: Chorismate synthase (405 aa).

Arginine 43 and arginine 49 together coordinate NADP(+). FMN is bound by residues 138-140 (RAS) and 259-260 (QA). Residues 275 to 286 (RRGSQAHDEMRP) show a composition bias toward basic and acidic residues. Residues 275–308 (RRGSQAHDEMRPGPDGVLRSTNRAGGLEGGMTNG) form a disordered region. FMN-binding positions include glycine 303, 318-322 (KPIST), and arginine 344.

This sequence belongs to the chorismate synthase family. Homotetramer. It depends on FMNH2 as a cofactor.

The enzyme catalyses 5-O-(1-carboxyvinyl)-3-phosphoshikimate = chorismate + phosphate. Its pathway is metabolic intermediate biosynthesis; chorismate biosynthesis; chorismate from D-erythrose 4-phosphate and phosphoenolpyruvate: step 7/7. Its function is as follows. Catalyzes the anti-1,4-elimination of the C-3 phosphate and the C-6 proR hydrogen from 5-enolpyruvylshikimate-3-phosphate (EPSP) to yield chorismate, which is the branch point compound that serves as the starting substrate for the three terminal pathways of aromatic amino acid biosynthesis. This reaction introduces a second double bond into the aromatic ring system. In Nocardia farcinica (strain IFM 10152), this protein is Chorismate synthase.